A 239-amino-acid chain; its full sequence is DnaA regulatory inactivator Hda (239 aa).

It belongs to the DnaA family. HdA subfamily. In terms of assembly, the active form seems to be an ADP-bound monomer. Forms the RIDA complex (regulatory inactivation of DnaA) of ATP-DnaA, ADP-Hda and the DNA-loaded beta sliding clamp (dnaN).

In terms of biological role, mediates the interaction of DNA replication initiator protein DnaA with DNA polymerase subunit beta sliding clamp (dnaN). Stimulates hydrolysis of ATP-DnaA to ADP-DnaA, rendering DnaA inactive for reinitiation, a process called regulatory inhibition of DnaA or RIDA. The chain is DnaA regulatory inactivator Hda from Yersinia enterocolitica serotype O:8 / biotype 1B (strain NCTC 13174 / 8081).